Here is a 358-residue protein sequence, read N- to C-terminus: 3-dehydroquinate synthase (358 aa).

NAD(+) contacts are provided by residues 70–75 (DGEQFK), 104–108 (GVIGD), 128–129 (TT), Lys141, Lys150, and 168–171 (CLHT). 3 residues coordinate Zn(2+): Glu183, His246, and His263.

Belongs to the sugar phosphate cyclases superfamily. Dehydroquinate synthase family. It depends on Co(2+) as a cofactor. Requires Zn(2+) as cofactor. The cofactor is NAD(+).

It is found in the cytoplasm. It catalyses the reaction 7-phospho-2-dehydro-3-deoxy-D-arabino-heptonate = 3-dehydroquinate + phosphate. It functions in the pathway metabolic intermediate biosynthesis; chorismate biosynthesis; chorismate from D-erythrose 4-phosphate and phosphoenolpyruvate: step 2/7. Catalyzes the conversion of 3-deoxy-D-arabino-heptulosonate 7-phosphate (DAHP) to dehydroquinate (DHQ). This is 3-dehydroquinate synthase from Shewanella baltica (strain OS185).